The sequence spans 265 residues: Hydroxyethylthiazole kinase (265 aa).

Met-44 is a substrate binding site. ATP is bound by residues Lys-120 and Ser-166. Substrate is bound at residue Gly-193.

The protein belongs to the Thz kinase family. Mg(2+) serves as cofactor.

It catalyses the reaction 5-(2-hydroxyethyl)-4-methylthiazole + ATP = 4-methyl-5-(2-phosphooxyethyl)-thiazole + ADP + H(+). Its pathway is cofactor biosynthesis; thiamine diphosphate biosynthesis; 4-methyl-5-(2-phosphoethyl)-thiazole from 5-(2-hydroxyethyl)-4-methylthiazole: step 1/1. Its function is as follows. Catalyzes the phosphorylation of the hydroxyl group of 4-methyl-5-beta-hydroxyethylthiazole (THZ). The chain is Hydroxyethylthiazole kinase from Methanosphaerula palustris (strain ATCC BAA-1556 / DSM 19958 / E1-9c).